The primary structure comprises 262 residues: Phosphatidylglycerol--prolipoprotein diacylglyceryl transferase (262 aa).

Transmembrane regions (helical) follow at residues 9–29 (LGPL…ILAV), 41–61 (IIPD…ILGA), 80–100 (IFAI…GALV), and 109–129 (LINT…AQSL). Arg131 contacts a 1,2-diacyl-sn-glycero-3-phospho-(1'-sn-glycerol). 3 consecutive transmembrane segments (helical) span residues 167–187 (QPTF…ILIF), 197–217 (GHIT…IEGM), and 226–246 (GLRV…MIVI).

This sequence belongs to the Lgt family.

It localises to the cell membrane. It catalyses the reaction L-cysteinyl-[prolipoprotein] + a 1,2-diacyl-sn-glycero-3-phospho-(1'-sn-glycerol) = an S-1,2-diacyl-sn-glyceryl-L-cysteinyl-[prolipoprotein] + sn-glycerol 1-phosphate + H(+). It functions in the pathway protein modification; lipoprotein biosynthesis (diacylglyceryl transfer). Catalyzes the transfer of the diacylglyceryl group from phosphatidylglycerol to the sulfhydryl group of the N-terminal cysteine of a prolipoprotein, the first step in the formation of mature lipoproteins. The protein is Phosphatidylglycerol--prolipoprotein diacylglyceryl transferase of Streptococcus pneumoniae (strain Taiwan19F-14).